A 233-amino-acid polypeptide reads, in one-letter code: tRNA (guanine-N(1)-)-methyltransferase (233 aa).

Residues Gly-121 and Ile-140–Leu-145 contribute to the S-adenosyl-L-methionine site.

Belongs to the RNA methyltransferase TrmD family. In terms of assembly, homodimer.

The protein localises to the cytoplasm. It catalyses the reaction guanosine(37) in tRNA + S-adenosyl-L-methionine = N(1)-methylguanosine(37) in tRNA + S-adenosyl-L-homocysteine + H(+). In terms of biological role, specifically methylates guanosine-37 in various tRNAs. The chain is tRNA (guanine-N(1)-)-methyltransferase from Endomicrobium trichonymphae.